Here is a 678-residue protein sequence, read N- to C-terminus: NADPH--cytochrome P450 reductase (678 aa).

Over 1–21 (MADSNMDAGTTTSEMVAEEVS) the chain is Lumenal. A helical transmembrane segment spans residues 22-42 (LFSTTDVILFSLIVGVMTYWF). The Cytoplasmic segment spans residues 43–678 (LFRKKKEEVP…KGRYSLDVWS (636 aa)). The residue at position 63 (Ser63) is a Phosphoserine. The Flavodoxin-like domain occupies 80–224 (IIVFYGSQTG…DFITWREQFW (145 aa)). Residues 86–91 (SQTGTA), 138–141 (ATYG), 173–182 (LGNKTYEHFN), and Asp208 each bind FMN. The 243-residue stretch at 279 to 521 (KNPFLAVVTT…YVRKSQFRLP (243 aa)) folds into the FAD-binding FR-type domain. Position 298 (Arg298) interacts with NADP(+). FAD contacts are provided by residues Arg424, 454–457 (RYYS), 472–474 (CAV), Tyr478, and 488–491 (GVAT). NADP(+) contacts are provided by residues Thr535, 596–597 (SR), 602–606 (KVYVQ), and Asp639. FAD is bound at residue Trp677.

Belongs to the NADPH--cytochrome P450 reductase family. It in the N-terminal section; belongs to the flavodoxin family. The protein in the C-terminal section; belongs to the flavoprotein pyridine nucleotide cytochrome reductase family. The cofactor is FAD. Requires FMN as cofactor.

The protein resides in the endoplasmic reticulum membrane. It catalyses the reaction 2 oxidized [cytochrome P450] + NADPH = 2 reduced [cytochrome P450] + NADP(+) + H(+). Its function is as follows. This enzyme is required for electron transfer from NADP to cytochrome P450 in microsomes. It can also provide electron transfer to heme oxygenase and cytochrome B5. This is NADPH--cytochrome P450 reductase from Bos taurus (Bovine).